The chain runs to 735 residues: Post-transcriptional regulator MKT1 (735 aa).

Residues 475–722 (QVIYNTMEET…ANERMKRAQK (248 aa)) are interaction with PBP1.

The protein belongs to the XPG/RAD2 endonuclease family. In terms of assembly, forms a complex composed of at least MKT1, PBP1, XAC1 and LSM12. Within the complex, interacts (via C-terminus) with PBP1; the interaction is direct. Interacts with RNA-binding protein ZC3H11 (via MKT1-binding motif); the interaction is direct. May interact with RNA-binding proteins CFB1 and CFB2. Interacts with the EIF4E6-EIF4G5 translation initiation complex via EIF4G5; the interaction with EIF4G5 is direct.

The protein localises to the cytoplasm. Its subcellular location is the cytosol. It is found in the stress granule. In terms of biological role, involved in post-transcriptional regulation of gene expression. Promotes mRNA stabilization by recruiting a complex containing PBP1, LSM12 and XAC1 to mRNAs. Recruited to mRNAs by sequence-specific RNA binding proteins. May regulate translation through interactions with the EIF4E6-EIF4G5 translation initiation complex. This chain is Post-transcriptional regulator MKT1, found in Trypanosoma brucei brucei (strain 927/4 GUTat10.1).